The primary structure comprises 1131 residues: Homeobox-DDT domain protein RLT3 (1131 aa).

The segment at residues Lys2 to Lys56 is a DNA-binding region (homeobox; TALE-type). Over residues Leu239 to Ile251 the composition is skewed to basic residues. Residues Leu239 to Arg264 are disordered. Positions His252 to Arg264 are enriched in basic and acidic residues. In terms of domain architecture, DDT spans Pro365 to Thr424. Residues Glu579–Ile609 are disordered. A compositionally biased stretch (acidic residues) spans Asp587–Asp600.

It localises to the nucleus. Functionally, transcriptional regulator required for the maintenance of the plant vegetative phase. May prevent the early activation of the vegetative-to-reproductive transition by regulating key genes that contribute to flower timing. The sequence is that of Homeobox-DDT domain protein RLT3 from Arabidopsis thaliana (Mouse-ear cress).